The following is a 491-amino-acid chain: Cyclin-B1-5 (491 aa).

A Cyclin N-terminal domain is found at 275 to 347 (DMYSFYKEVE…VKAVPKRELQ (73 aa)).

This sequence belongs to the cyclin family. Cyclin AB subfamily. As to expression, expressed in roots, stems and flowers.

The chain is Cyclin-B1-5 (CYCB1-5) from Arabidopsis thaliana (Mouse-ear cress).